The sequence spans 1132 residues: Cytospin-A (1132 aa).

The tract at residues 1–166 (MKKAGRPVGN…SKSDGQLSDK (166 aa)) is disordered. 2 stretches are compositionally biased toward low complexity: residues 73–109 (STHS…SKES) and 119–129 (SRNSSSKKQSS). Residues 150 to 159 (SESRMSKSKS) are compositionally biased toward basic and acidic residues. The stretch at 226–268 (DVESTLLLLQEQNQAIRGELNLLKNENRMLKDRLNALGFSLEQ) forms a coiled coil. Positions 301–381 (ASSVEGSAPG…RKGSSGNTSE (81 aa)) are disordered. The segment covering 333-343 (SEVYQAVTSSD) has biased composition (polar residues). A compositionally biased stretch (low complexity) spans 348 to 377 (APSGCGSSSSSESEGGPPACRSSSRKGSSG). Coiled coils occupy residues 385–440 (ACLT…MDSL) and 478–798 (RYME…RGRV). Disordered regions lie at residues 869–895 (TSTT…AAAV) and 939–1016 (SRPA…RKDP). Residues 875-889 (APLPRTPLSPSPMKT) are compositionally biased toward pro residues. Residues 946-961 (QRVSNMDTSKTITVSR) show a composition bias toward polar residues. Over residues 962–972 (RSSEEPKRDIS) the composition is skewed to basic and acidic residues. Over residues 979 to 1000 (ASSLISMSSAAALSSSSSPTAS) the composition is skewed to low complexity. Residues 1026–1131 (GSKRNALLRW…YVTSIYKYFE (106 aa)) form the Calponin-homology (CH) domain.

This sequence belongs to the cytospin-A family. As to quaternary structure, may interact with both microtubules and actin cytoskeleton.

The protein resides in the cytoplasm. It localises to the cytoskeleton. The protein localises to the spindle. Its subcellular location is the cell junction. It is found in the gap junction. Involved in cytokinesis and spindle organization. May play a role in actin cytoskeleton organization and microtubule stabilization and hence required for proper cell adhesion and migration. In Danio rerio (Zebrafish), this protein is Cytospin-A (specc1la).